Consider the following 205-residue polypeptide: Ras-related and estrogen-regulated growth inhibitor-like protein (205 aa).

The segment at 1–205 (MSNFLHLKYN…NVFGKRRKSV (205 aa)) is small GTPase-like. Residues 11–18 (EKSVSVTK), 58–64 (DPCSQTQ), and 123–126 (NKRD) each bind GTP.

It belongs to the small GTPase superfamily. Ras family.

The enzyme catalyses GTP + H2O = GDP + phosphate + H(+). Functionally, binds GDP/GTP and may possess intrinsic GTPase activity. The polypeptide is Ras-related and estrogen-regulated growth inhibitor-like protein (RERGL) (Homo sapiens (Human)).